Here is a 219-residue protein sequence, read N- to C-terminus: Sugar fermentation stimulation protein homolog (219 aa).

Belongs to the SfsA family.

This chain is Sugar fermentation stimulation protein homolog, found in Archaeoglobus fulgidus (strain ATCC 49558 / DSM 4304 / JCM 9628 / NBRC 100126 / VC-16).